A 407-amino-acid chain; its full sequence is 8-amino-7-oxononanoate synthase (407 aa).

R24 serves as a coordination point for substrate. Residue 111-112 (GF) coordinates pyridoxal 5'-phosphate. Residue H137 coordinates substrate. The pyridoxal 5'-phosphate site is built by S183, H211, and T239. K242 carries the N6-(pyridoxal phosphate)lysine modification. T356 contacts substrate.

It belongs to the class-II pyridoxal-phosphate-dependent aminotransferase family. BioF subfamily. Homodimer. The cofactor is pyridoxal 5'-phosphate.

The enzyme catalyses 6-carboxyhexanoyl-[ACP] + L-alanine + H(+) = (8S)-8-amino-7-oxononanoate + holo-[ACP] + CO2. Its pathway is cofactor biosynthesis; biotin biosynthesis. Catalyzes the decarboxylative condensation of pimeloyl-[acyl-carrier protein] and L-alanine to produce 8-amino-7-oxononanoate (AON), [acyl-carrier protein], and carbon dioxide. This Stenotrophomonas maltophilia (strain R551-3) protein is 8-amino-7-oxononanoate synthase.